The primary structure comprises 122 residues: Large ribosomal subunit protein uL14 (122 aa).

It belongs to the universal ribosomal protein uL14 family. Part of the 50S ribosomal subunit. Forms a cluster with proteins L3 and L19. In the 70S ribosome, L14 and L19 interact and together make contacts with the 16S rRNA in bridges B5 and B8.

Its function is as follows. Binds to 23S rRNA. Forms part of two intersubunit bridges in the 70S ribosome. The chain is Large ribosomal subunit protein uL14 from Bartonella quintana (strain Toulouse) (Rochalimaea quintana).